Consider the following 82-residue polypeptide: Defensin-like protein 275 (82 aa).

The first 23 residues, 1–23 (MALSKFQLVALLITYTLLFSCQS), serve as a signal peptide directing secretion. Intrachain disulfides connect Cys36–Cys78, Cys42–Cys65, Cys48–Cys76, and Cys52–Cys77.

It belongs to the DEFL family.

It is found in the secreted. In Arabidopsis thaliana (Mouse-ear cress), this protein is Defensin-like protein 275.